Reading from the N-terminus, the 497-residue chain is Signal recognition particle subunit SRP54 2 (497 aa).

A G-domain region spans residues Met1–Leu295. GTP contacts are provided by residues Gly108–Thr115, Asp190–Arg194, and Thr248–Asp251. An M-domain region spans residues Gly296–Asp497.

The protein belongs to the GTP-binding SRP family. SRP54 subfamily. In terms of assembly, component of a signal recognition particle (SRP) complex that consists of a 7SL RNA molecule of 300 nucleotides and six protein subunits: SRP72, SRP68, SRP54, SRP19, SRP14 and SRP9.

It localises to the cytoplasm. The protein resides in the endoplasmic reticulum. The catalysed reaction is GTP + H2O = GDP + phosphate + H(+). Its function is as follows. Component of the signal recognition particle (SRP) complex, a ribonucleoprotein complex that mediates the cotranslational targeting of secretory and membrane proteins to the endoplasmic reticulum (ER). As part of the SRP complex, associates with the SRP receptor (SR) component SRPRA to target secretory proteins to the endoplasmic reticulum membrane. Binds to the signal sequence of presecretory proteins when they emerge from the ribosomes. Displays basal GTPase activity, and stimulates reciprocal GTPase activation of the SR subunit SRPRA. Forms a guanosine 5'-triphosphate (GTP)-dependent complex with the SR subunit SRPRA. SR compaction and GTPase mediated rearrangement of SR drive SRP-mediated cotranslational protein translocation into the ER. Requires the presence of SRP9/SRP14 and/or SRP19 to stably interact with RNA. The polypeptide is Signal recognition particle subunit SRP54 2 (SRP54-2) (Hordeum vulgare (Barley)).